Consider the following 901-residue polypeptide: Probable inorganic carbon transporter subunit DabA (901 aa).

4 residues coordinate Zn(2+): C424, D426, H606, and C621.

It belongs to the inorganic carbon transporter (TC 9.A.2) DabA family. As to quaternary structure, forms a complex with DabB. Zn(2+) serves as cofactor.

The protein localises to the cell membrane. In terms of biological role, part of an energy-coupled inorganic carbon pump. The chain is Probable inorganic carbon transporter subunit DabA from Staphylococcus aureus (strain NCTC 8325 / PS 47).